Consider the following 266-residue polypeptide: Undecaprenyl-diphosphatase (266 aa).

7 helical membrane passes run 8–28 (VLAL…AHLI), 39–59 (QGLA…VIYF), 87–107 (WAVG…HDII), 113–133 (SAQV…FADV), 188–208 (SFLL…LGLV), 219–239 (MIVL…HYFL), and 246–266 (TMLP…FLFW).

The protein belongs to the UppP family.

The protein localises to the cell inner membrane. The catalysed reaction is di-trans,octa-cis-undecaprenyl diphosphate + H2O = di-trans,octa-cis-undecaprenyl phosphate + phosphate + H(+). Functionally, catalyzes the dephosphorylation of undecaprenyl diphosphate (UPP). Confers resistance to bacitracin. The protein is Undecaprenyl-diphosphatase of Thioalkalivibrio sulfidiphilus (strain HL-EbGR7).